We begin with the raw amino-acid sequence, 1296 residues long: ABC transporter B family member 21 (1296 aa).

The tract at residues 1 to 59 (MDSVIESEEGLKVDSPNRADAETSNSKIHEEDEKELKTESDLKEEKKKTEKNKQEEDEK) is disordered. Basic and acidic residues predominate over residues 9-59 (EGLKVDSPNRADAETSNSKIHEEDEKELKTESDLKEEKKKTEKNKQEEDEK). A helical transmembrane segment spans residues 77-97 (IILMILGTIGAVGNGLGFPIM). In terms of domain architecture, ABC transmembrane type-1 1 spans 80-368 (MILGTIGAVG…ASPCLSAFAA (289 aa)). Asn113 carries N-linked (GlcNAc...) asparagine glycosylation. A run of 5 helical transmembrane segments spans residues 128-148 (FVYLGLGTLVAALLQVSGWMI), 205-225 (IQLVSTFIGGFVIAFTEGWLL), 227-247 (LVMVSSIPLLVMSGAALAIVI), 307-327 (GLGLGTLNIVIFCTYALAVWY), and 336-356 (GYTGGQVLIIIFAVLTGSMSL). The region spanning 403-639 (IELNNVNFSY…PEGAYSQLIR (237 aa)) is the ABC transporter 1 domain. Asn409 carries N-linked (GlcNAc...) asparagine glycosylation. 438–445 (GQSGSGKS) contributes to the ATP binding site. N-linked (GlcNAc...) asparagine glycans are attached at residues Asn505, Asn519, and Asn590. Residues 640–662 (LQEDTKQTEDSTDEQKLSMESMK) show a composition bias toward basic and acidic residues. The disordered stretch occupies residues 640-672 (LQEDTKQTEDSTDEQKLSMESMKRSSLRKSSLS). 2 positions are modified to phosphoserine: Ser657 and Ser660. An ABC transmembrane type-1 2 domain is found at 730–1017 (LILGSIAAVL…SSSLSPDSSK (288 aa)). 2 helical membrane passes run 731 to 751 (ILGSIAAVLNGVILPIFGILI) and 774 to 794 (IIFMLLGVASMVVFPAQTIFF). Asn826 is a glycosylation site (N-linked (GlcNAc...) asparagine). 3 helical membrane-spanning segments follow: residues 865-885 (VIAFVASWQLAFIVLAMLPLI), 952-972 (GIVSGIGFGVSFFVLFSSYAA), and 986-1006 (TTFDSVFRVFFALTMAAVAIS). The region spanning 1052-1289 (IELRHISFKY…KDGVYASLVQ (238 aa)) is the ABC transporter 2 domain. 1087–1094 (GESGSGKS) lines the ATP pocket. N-linked (GlcNAc...) asparagine glycans are attached at residues Asn1141 and Asn1240.

It belongs to the ABC transporter superfamily. ABCB family. Multidrug resistance exporter (TC 3.A.1.201) subfamily.

It localises to the membrane. The chain is ABC transporter B family member 21 (ABCB21) from Arabidopsis thaliana (Mouse-ear cress).